The chain runs to 358 residues: MPAHILQEISGSYSATTTITAPPSGGQQNGGEKFEKNPHHWGADVRPEIKDDLYDPSYQDEEGPPPKLEYVWRNIVLMALLHIGALYGITLVPSCKVYTCLFAYLYYVISALGITAGAHRLWSHRTYKARLPLRLFLIIANTMAFQNDVYEWARDHRAHHKFSETHADPHNSRRGFFFSHVGWLLVRKHPAVKEKGGKLDMSDLKAEKLVMFQRRYYKPGLLLMCFILPTLVPWYCWGETFVNSLCVSTFLRYAVVLNATWLVNSAAHLYGYRPYDKNISSRENILVSMGAVGEGFHNYHHAFPYDYSASEYRWHINFTTFFIDCMALLGLAYDRKRVSKAAVLARIKRTGEESCKSG.

Over 1–71 the chain is Cytoplasmic; that stretch reads MPAHILQEIS…EGPPPKLEYV (71 aa). The interval 14–43 is disordered; sequence SATTTITAPPSGGQQNGGEKFEKNPHHWGA. The segment covering 32-43 has biased composition (basic and acidic residues); sequence EKFEKNPHHWGA. Residues 72–92 traverse the membrane as a helical segment; the sequence is WRNIVLMALLHIGALYGITLV. Asparagine 74 lines the substrate pocket. Over 93–96 the chain is Lumenal; that stretch reads PSCK. A helical transmembrane segment spans residues 97–117; it reads VYTCLFAYLYYVISALGITAG. Residues 118-216 are Cytoplasmic-facing; sequence AHRLWSHRTY…EKLVMFQRRY (99 aa). Fe cation contacts are provided by histidine 119 and histidine 124. The Histidine box-1 signature appears at 119 to 124; it reads HRLWSH. Residues asparagine 147, arginine 154, and aspartate 155 each contribute to the substrate site. The Fe cation site is built by histidine 156, histidine 159, and histidine 160. Positions 156–160 match the Histidine box-2 motif; the sequence is HRAHH. Positions 187 and 188 each coordinate substrate. Residues 217–236 traverse the membrane as a helical segment; it reads YKPGLLLMCFILPTLVPWYC. Residues 237 to 240 lie on the Lumenal side of the membrane; the sequence is WGET. Residues 241-262 form a helical membrane-spanning segment; sequence FVNSLCVSTFLRYAVVLNATWL. Residue tryptophan 261 coordinates substrate. At 263–358 the chain is on the cytoplasmic side; it reads VNSAAHLYGY…RTGEESCKSG (96 aa). Fe cation-binding residues include histidine 268, histidine 297, histidine 300, and histidine 301. The short motif at 297–301 is the Histidine box-3 element; it reads HNYHH.

Belongs to the fatty acid desaturase type 1 family. Fe(2+) is required as a cofactor. As to expression, detected in brain and adipose tissue, and at much lower levels in testis. Detected in liver when rats are kept on a fat-free diet, but not when their food contains unsaturated fatty acids.

The protein localises to the endoplasmic reticulum membrane. The protein resides in the microsome membrane. It carries out the reaction octadecanoyl-CoA + 2 Fe(II)-[cytochrome b5] + O2 + 2 H(+) = (9Z)-octadecenoyl-CoA + 2 Fe(III)-[cytochrome b5] + 2 H2O. The catalysed reaction is hexadecanoyl-CoA + 2 Fe(II)-[cytochrome b5] + O2 + 2 H(+) = (9Z)-hexadecenoyl-CoA + 2 Fe(III)-[cytochrome b5] + 2 H2O. Functionally, stearoyl-CoA desaturase that utilizes O(2) and electrons from reduced cytochrome b5 to introduce the first double bond into saturated fatty acyl-CoA substrates. Catalyzes the insertion of a cis double bond at the delta-9 position into fatty acyl-CoA substrates including palmitoyl-CoA and stearoyl-CoA. Gives rise to a mixture of 16:1 and 18:1 unsaturated fatty acids. Contributes to the biosynthesis of membrane phospholipids, cholesterol esters and triglycerides, especially during embryonic development and in neonates. Important for normal permeability barrier function of the skin in neonates. In Rattus norvegicus (Rat), this protein is Stearoyl-CoA desaturase 2 (Scd2).